The following is a 339-amino-acid chain: Phosphate acyltransferase (339 aa).

The protein belongs to the PlsX family. In terms of assembly, homodimer. Probably interacts with PlsY.

Its subcellular location is the cytoplasm. It catalyses the reaction a fatty acyl-[ACP] + phosphate = an acyl phosphate + holo-[ACP]. Its pathway is lipid metabolism; phospholipid metabolism. Its function is as follows. Catalyzes the reversible formation of acyl-phosphate (acyl-PO(4)) from acyl-[acyl-carrier-protein] (acyl-ACP). This enzyme utilizes acyl-ACP as fatty acyl donor, but not acyl-CoA. The protein is Phosphate acyltransferase of Dechloromonas aromatica (strain RCB).